The primary structure comprises 864 residues: Disintegrin and metalloproteinase domain-containing protein 15 (864 aa).

Residues 1–17 (MRLALLWALGLLGAGSP) form the signal peptide. The segment at 18–45 (RPSPPLPNIGGTEEEQQASPERTLSGSM) is disordered. Positions 18–207 (RPSPPLPNIG…EQHHAHRLKR (190 aa)) are excised as a propeptide. Over residues 34–45 (QASPERTLSGSM) the composition is skewed to polar residues. The short motif at 177 to 184 (HTCAPSWH) is the Cysteine switch element. Cys-179 lines the Zn(2+) pocket. The Extracellular segment spans residues 208-696 (DVVTETKIVE…TQLKATSSLT (489 aa)). Residues 214 to 415 (KIVELVIVAD…GMGSCLFERQ (202 aa)) form the Peptidase M12B domain. The N-linked (GlcNAc...) asparagine glycan is linked to Asn-238. Disulfide bonds link Cys-324-Cys-410, Cys-366-Cys-394, Cys-368-Cys-377, and Cys-481-Cys-501. His-349 lines the Zn(2+) pocket. The active site involves Glu-350. Zn(2+) contacts are provided by His-353 and His-359. 2 N-linked (GlcNAc...) asparagine glycosylation sites follow: Asn-390 and Asn-393. The region spanning 422-509 (SSLCGNMFVD…QCPSDIRLGD (88 aa)) is the Disintegrin domain. N-linked (GlcNAc...) asparagine glycosylation is found at Asn-607 and Asn-612. 3 cysteine pairs are disulfide-bonded: Cys-658–Cys-668, Cys-662–Cys-674, and Cys-676–Cys-685. In terms of domain architecture, EGF-like spans 658–686 (CRRKCHGHGVCDSSGHCRCEEGWAPPDCM). A helical transmembrane segment spans residues 697 to 717 (TGLLLSLLLLLVLVLLGASYW). 2 positions are modified to phosphotyrosine; by HCK and LCK: Tyr-716 and Tyr-736. Topologically, residues 718 to 864 (HRARLHQRLC…PPPAASSLYL (147 aa)) are cytoplasmic. The interval 736–864 (YRAPQSCPPE…PPPAASSLYL (129 aa)) is disordered. Over residues 741 to 750 (SCPPERPGPP) the composition is skewed to pro residues. Polar residues predominate over residues 752–762 (RAQQMTGTKQA). 2 stretches are compositionally biased toward pro residues: residues 768-780 (PVPP…PNPV) and 814-825 (TKPPPPRKPLPA). Short sequence motifs (SH3-binding) lie at residues 816 to 822 (PPPPRKP) and 851 to 857 (RPAPPPP).

As to quaternary structure, interacts specifically with Src family protein-tyrosine kinases (PTKs). Interacts with ITAGV-ITGB3 (vitronectin receptor). Interacts with SH3GL2 and SNX9; this interaction occurs preferentially with ADAM15 precursor, rather than the processed form, suggesting it occurs in a secretory pathway compartment prior to the medial Golgi. Interacts with ITAG9-ITGB1. Interacts with SH3PXD2A. Interacts with ITAGV-ITGB1. Interacts with GRB2, HCK, ITSN1, ITSN2, LYN, MAPK1, MAPK3, NCF1, NCK1, nephrocystin, PTK6, SNX33, LCK and SRC. Requires Zn(2+) as cofactor. In terms of processing, the precursor is cleaved by a furin endopeptidase. An additional membrane proximal site of cleavage affects a small percentage of the proteins and results in disulfide-linked fragments. The prodomain is apparently cleaved in several positions that are N-terminal of the furin cleavage site. May be partially sialylated. Post-translationally, phosphorylation increases association with PTKs. As to expression, expressed moderately in pericytes of retina. Expressed in testis and in spermatozoa from the caput, corpus, and cauda epididymis, as well as in non-capacitated and acrosome-reacted sperm (at protein level). Highly expressed in heart, brain, lung, and kidney. Expressed at lower levels in spleen, liver, testis and muscle.

It is found in the endomembrane system. It localises to the cell junction. Its subcellular location is the adherens junction. The protein localises to the cell projection. The protein resides in the cilium. It is found in the flagellum. It localises to the cytoplasmic vesicle. Its subcellular location is the secretory vesicle. The protein localises to the acrosome. Functionally, active metalloproteinase with gelatinolytic and collagenolytic activity. Plays a role in the wound healing process. Mediates both heterotypic intraepithelial cell/T-cell interactions and homotypic T-cell aggregation. Inhibits beta-1 integrin-mediated cell adhesion and migration of airway smooth muscle cells. Suppresses cell motility on or towards fibronectin possibly by driving alpha-v/beta-1 integrin (ITAGV-ITGB1) cell surface expression via ERK1/2 inactivation. Cleaves E-cadherin in response to growth factor deprivation. Plays a role in glomerular cell migration. Plays a role in pathological neovascularization. May play a role in cartilage remodeling. May be proteolytically processed, during sperm epididymal maturation and the acrosome reaction. May play a role in sperm-egg binding through its disintegrin domain. Interactions with egg membrane could be mediated via binding between the disintegrin-like domain to one or more integrin receptors on the egg. This is Disintegrin and metalloproteinase domain-containing protein 15 (Adam15) from Mus musculus (Mouse).